The sequence spans 335 residues: Biotin synthase (335 aa).

A Radical SAM core domain is found at 46-274 (YKVQLASLFS…KSKIRLSAGR (229 aa)). Cys61, Cys65, and Cys68 together coordinate [4Fe-4S] cluster. The [2Fe-2S] cluster site is built by Cys105, Cys137, Cys197, and Arg269.

It belongs to the radical SAM superfamily. Biotin synthase family. As to quaternary structure, homodimer. [4Fe-4S] cluster is required as a cofactor. It depends on [2Fe-2S] cluster as a cofactor.

It catalyses the reaction (4R,5S)-dethiobiotin + (sulfur carrier)-SH + 2 reduced [2Fe-2S]-[ferredoxin] + 2 S-adenosyl-L-methionine = (sulfur carrier)-H + biotin + 2 5'-deoxyadenosine + 2 L-methionine + 2 oxidized [2Fe-2S]-[ferredoxin]. It functions in the pathway cofactor biosynthesis; biotin biosynthesis; biotin from 7,8-diaminononanoate: step 2/2. Functionally, catalyzes the conversion of dethiobiotin (DTB) to biotin by the insertion of a sulfur atom into dethiobiotin via a radical-based mechanism. This Prochlorococcus marinus (strain MIT 9515) protein is Biotin synthase.